The following is a 387-amino-acid chain: Protein mab-21-like 3 (387 aa).

The protein belongs to the mab-21 family.

In Danio rerio (Zebrafish), this protein is Protein mab-21-like 3 (mab21L3).